A 197-amino-acid chain; its full sequence is RNA pyrophosphohydrolase (197 aa).

The Nudix hydrolase domain maps to 6–149 (GYRPNVGIVI…KRDVYRKAMK (144 aa)). Residues 38 to 59 (GGINDGETPEQAMYRELYEEVG) carry the Nudix box motif. The disordered stretch occupies residues 165–197 (LSTNNNDEKKANYSAKKPYSPYRNQDKKRKTRV).

This sequence belongs to the Nudix hydrolase family. RppH subfamily. Requires a divalent metal cation as cofactor.

In terms of biological role, accelerates the degradation of transcripts by removing pyrophosphate from the 5'-end of triphosphorylated RNA, leading to a more labile monophosphorylated state that can stimulate subsequent ribonuclease cleavage. This chain is RNA pyrophosphohydrolase, found in Mannheimia succiniciproducens (strain KCTC 0769BP / MBEL55E).